The following is a 146-amino-acid chain: D-aminoacyl-tRNA deacylase (146 aa).

The Gly-cisPro motif, important for rejection of L-amino acids motif lies at 137–138 (GP).

It belongs to the DTD family. In terms of assembly, homodimer.

Its subcellular location is the cytoplasm. It carries out the reaction glycyl-tRNA(Ala) + H2O = tRNA(Ala) + glycine + H(+). It catalyses the reaction a D-aminoacyl-tRNA + H2O = a tRNA + a D-alpha-amino acid + H(+). Its function is as follows. An aminoacyl-tRNA editing enzyme that deacylates mischarged D-aminoacyl-tRNAs. Also deacylates mischarged glycyl-tRNA(Ala), protecting cells against glycine mischarging by AlaRS. Acts via tRNA-based rather than protein-based catalysis; rejects L-amino acids rather than detecting D-amino acids in the active site. By recycling D-aminoacyl-tRNA to D-amino acids and free tRNA molecules, this enzyme counteracts the toxicity associated with the formation of D-aminoacyl-tRNA entities in vivo and helps enforce protein L-homochirality. This is D-aminoacyl-tRNA deacylase from Bacillus cytotoxicus (strain DSM 22905 / CIP 110041 / 391-98 / NVH 391-98).